Reading from the N-terminus, the 304-residue chain is Endonuclease III-like protein 1 (304 aa).

The transit peptide at 1–22 (MTALSARMLTRSRSLGPGAGPR) directs the protein to the mitochondrion. A disordered region spans residues 1 to 72 (MTALSARMLT…SDSEKGEGAE (72 aa)). Residues 23–42 (GCREEPGPLRRREAAAEARK) are compositionally biased toward basic and acidic residues. Residues 28–52 (PGPLRRREAAAEARKSHSPVKRPRK) carry the Bipartite nuclear localization signal motif. Over residues 43-55 (SHSPVKRPRKAQR) the composition is skewed to basic residues. Phosphoserine is present on residues Ser63 and Ser65. Residues 191 to 215 (HYGGDIPASVAELVALPGVGPKMAH) form the HhH domain. Lys212 functions as the Nucleophile; for N-glycosylase activity in the catalytic mechanism. 4 residues coordinate [4Fe-4S] cluster: Cys282, Cys289, Cys292, and Cys298.

This sequence belongs to the Nth/MutY family. In terms of assembly, interacts with YBX1. Interacts with ERCC5/XPG; the interaction stimulates NTHL1 activity and NTHL1 binding to its DNA substrate. It depends on [4Fe-4S] cluster as a cofactor. In terms of processing, ubiquitinated by TRIM26; leading to proteasomal degradation. Widely expressed with highest levels in heart and lowest levels in lung and liver.

The protein localises to the nucleus. It is found in the mitochondrion. The catalysed reaction is 2'-deoxyribonucleotide-(2'-deoxyribose 5'-phosphate)-2'-deoxyribonucleotide-DNA = a 3'-end 2'-deoxyribonucleotide-(2,3-dehydro-2,3-deoxyribose 5'-phosphate)-DNA + a 5'-end 5'-phospho-2'-deoxyribonucleoside-DNA + H(+). With respect to regulation, APE1 displaces NTHL1 from the N-glycosylase-generated AP site in DNA, thereby increasing the turnover of the DNA N-glycosylase activity. AP lyase activity is stimulated by YBX1. ERCC5/XPG stimulates NTHL1 activity and NTHL1 binding to its DNA substrate. Its function is as follows. Bifunctional DNA N-glycosylase with associated apurinic/apyrimidinic (AP) lyase function that catalyzes the first step in base excision repair (BER), the primary repair pathway for the repair of oxidative DNA damage. The DNA N-glycosylase activity releases the damaged DNA base from DNA by cleaving the N-glycosidic bond, leaving an AP site. The AP-lyase activity cleaves the phosphodiester bond 3' to the AP site by a beta-elimination. Primarily recognizes and repairs oxidative base damage of pyrimidines. Also has 8-oxo-7,8-dihydroguanine (8-oxoG) DNA glycosylase activity. Acts preferentially on DNA damage opposite guanine residues in DNA. Is able to process lesions in nucleosomes without requiring or inducing nucleosome disruption. The polypeptide is Endonuclease III-like protein 1 (Homo sapiens (Human)).